The primary structure comprises 200 residues: Transgelin (200 aa).

Position 2 is an N-acetylserine (S2). Position 11 is a phosphoserine (S11). The Calponin-homology (CH) domain maps to 26 to 136 (PEAIQNIKIW…QTLKSLSRYA (111 aa)). Positions 144–168 (FPVLGPQLSTKKPRPPVKSKPKHLQ) are disordered. The tract at residues 151–164 (LSTKKPRPPVKSKP) is interaction with SH3 domain of ABP1. Basic residues predominate over residues 154–165 (KKPRPPVKSKPK).

As to quaternary structure, binds to actin. Interacts with ABP1.

The protein localises to the cytoplasm. Its subcellular location is the cytoskeleton. The protein resides in the actin patch. Has actin-binding and actin-bundling activity. Stabilizes actin filaments against disassembly. This is Transgelin (SCP1) from Saccharomyces cerevisiae (strain ATCC 204508 / S288c) (Baker's yeast).